Reading from the N-terminus, the 1281-residue chain is Dynactin subunit 1 (1281 aa).

The segment at 1-26 (MAQSRRHMSSRTPSGSRMSTEASARP) is disordered. A compositionally biased stretch (polar residues) spans 10–22 (SRTPSGSRMSTEA). The CAP-Gly domain maps to 48–90 (GATLFATGKWVGVILDEAKGKNDGTVQGRKYFTCDEGHGIFVR). Residues 100-221 (GADTTSPETP…SPSKEEEGLR (122 aa)) form a disordered region. A compositionally biased stretch (polar residues) spans 102 to 114 (DTTSPETPDSSAS). Phosphothreonine is present on residues Thr-108, Thr-145, Thr-146, and Thr-147. Residues 129–152 (SKLRGLKPKKAPTARKTTTRRPKP) are compositionally biased toward basic residues. The span at 161 to 205 (AGPSSSLGPSGSASAGELSSSEPSTPAQTPLAAPIIPTPALTSPG) shows a compositional bias: low complexity. Phosphoserine; by PLK1 is present on Ser-179. Phosphoserine; by CDK1 is present on Ser-212. Coiled-coil stretches lie at residues 214 to 547 (SKEE…RQQQ), 943 to 1049 (LKLE…EGLR), and 1185 to 1214 (SAQLMEQVAQLKSLSDTIEKLKDEVLKETV). An interaction with HPS6 region spans residues 911-1281 (EYDAERPPSK…LHQLHSRLIS (371 aa)).

The protein belongs to the dynactin 150 kDa subunit family. Monomer and homodimer. Subunit of dynactin, a multiprotein complex part of a tripartite complex with dynein and a adapter, such as BICDL1, BICD2 or HOOK3. The dynactin complex is built around ACTR1A/ACTB filament and consists of an actin-related filament composed of a shoulder domain, a pointed end and a barbed end. Its length is defined by its flexible shoulder domain. The soulder is composed of 2 DCTN1 subunits, 4 DCTN2 and 2 DCTN3. DCTN1/p150(glued) binds directly to microtubules and to cytoplasmic dynein. The 4 DCNT2 (via N-terminus) bind the ACTR1A filament and act as molecular rulers to determine the length. The pointed end is important for binding dynein-dynactin cargo adapters. Consists of 4 subunits: ACTR10, DCNT4, DCTN5 and DCTN6. The barbed end is composed of a CAPZA1:CAPZB heterodimers, which binds ACTR1A/ACTB filament and dynactin and stabilizes dynactin. Interacts with the C-terminus of MAPRE1, MAPRE2 and MAPRE3. Interacts with FBXL5. Interacts with ECPAS. Interacts with CLIP1. Interacts with CLN3 and DYNAP. Interacts with MISP; this interaction regulates its distribution at the cell cortex. Interacts with CEP131. Interacts with CEP126. Interacts with dynein intermediate chain and dynein heavy chain. Interacts with PLK1 (via POLO-box domain). Interacts with TBCB and PARD6A. Binds preferentially to tyrosinated microtubules than to detyrosinated microtubules. Interacts with KIF3A. Interacts with HPS6. Interacts with SNX6. Interacts with BICD2. Interacts with DST (isoform 1). Identified in a complex with MREG and RILP. Interacts with BCCIP. Interacts with DCDC1. Interacts with AKNA. Interacts with DYNC1I2. Interacts with RUFY3 and RUFY4. In terms of processing, ubiquitinated by a SCF complex containing FBXL5, leading to its degradation by the proteasome. Post-translationally, phosphorylation by SLK at Thr-145, Thr-146 and Thr-147 targets DCTN1 to the centrosome. It is uncertain if SLK phosphorylates all three threonines or one or two of them. PLK1-mediated phosphorylation at Ser-179 is essential for its localization in the nuclear envelope and promotes its dissociation from microtubules during early mitosis and positively regulates nuclear envelope breakdown during prophase.

It localises to the cytoplasm. The protein localises to the cytoskeleton. The protein resides in the microtubule organizing center. It is found in the centrosome. Its subcellular location is the centriole. It localises to the spindle. The protein localises to the nucleus envelope. The protein resides in the cell cortex. Its function is as follows. Part of the dynactin complex that activates the molecular motor dynein for ultra-processive transport along microtubules. Plays a key role in dynein-mediated retrograde transport of vesicles and organelles along microtubules by recruiting and tethering dynein to microtubules. Binds to both dynein and microtubules providing a link between specific cargos, microtubules and dynein. Essential for targeting dynein to microtubule plus ends, recruiting dynein to membranous cargos and enhancing dynein processivity (the ability to move along a microtubule for a long distance without falling off the track). Can also act as a brake to slow the dynein motor during motility along the microtubule. Can regulate microtubule stability by promoting microtubule formation, nucleation and polymerization and by inhibiting microtubule catastrophe in neurons. Inhibits microtubule catastrophe by binding both to microtubules and to tubulin, leading to enhanced microtubule stability along the axon. Plays a role in metaphase spindle orientation. Plays a role in centriole cohesion and subdistal appendage organization and function. Its recruitment to the centriole in a KIF3A-dependent manner is essential for the maintenance of centriole cohesion and the formation of subdistal appendage. Also required for microtubule anchoring at the mother centriole. Plays a role in primary cilia formation. The polypeptide is Dynactin subunit 1 (Dctn1) (Mus musculus (Mouse)).